Reading from the N-terminus, the 464-residue chain is MAVYNYDVVVLGSGPAGEGAAMNAAKAGRKVAMVDSRRQVGGNCTHLGTIPSKALRHSVRQIMQFNTNPMFRAIGEPRWFSFPDVLKSAEKVISKQVASRTGYYARNRVDVFFGTGSFADEQTIEVVCANGVVEKLVAKHIIIATGSRPYRPADIDFHHPRIYDSDTILSLGHTPRKLIVYGAGVIGCEYASIFSGLGVLVELVDNRGQLLSFLDSEISQALSYHFSNNNITVRHNEEYDRVEGVDNGVILHLKSGKKIKADALLWCNGRTGNTDQLGLENIGVKVNSRGQIEVDENYRTCVQNIYGAGDVIGWPSLASAAHDQGRSAAGSIVDNGSWRFVNDVPTGIYTIPEISSIGKNEQELTQAKVPYEVGKAFFKSMARAQIAGEPQGMLKILFHRETLEVLGVHCFGYQASEIVHIGQAIMNQPGELNTLKYFVNTTFNYPTMAEAYRVAAYDGLNRLF.

Position 35 to 44 (35 to 44 (DSRRQVGGNC)) interacts with FAD.

Belongs to the class-I pyridine nucleotide-disulfide oxidoreductase family. It depends on FAD as a cofactor.

The protein localises to the cytoplasm. It carries out the reaction NAD(+) + NADPH = NADH + NADP(+). Its function is as follows. Conversion of NADPH, generated by peripheral catabolic pathways, to NADH, which can enter the respiratory chain for energy generation. This is Soluble pyridine nucleotide transhydrogenase from Pseudomonas fluorescens (strain Pf0-1).